The primary structure comprises 324 residues: Dermonecrotic toxin Hl-PLD1 (324 aa).

The first 35 residues, 1–35, serve as a signal peptide directing secretion; the sequence is MAHCYYNSKRGCNRVMKTVALVVLISTVMVEESRG. Histidine 50 is a catalytic residue. Mg(2+) contacts are provided by glutamate 70 and aspartate 72. Histidine 86 (nucleophile) is an active-site residue. Disulfide bonds link cysteine 90–cysteine 96 and cysteine 92–cysteine 236. Aspartate 130 is a binding site for Mg(2+).

Belongs to the arthropod phospholipase D family. Class II subfamily. Requires Mg(2+) as cofactor. As to expression, expressed by the venom gland.

Its subcellular location is the secreted. It carries out the reaction an N-(acyl)-sphingosylphosphocholine = an N-(acyl)-sphingosyl-1,3-cyclic phosphate + choline. It catalyses the reaction an N-(acyl)-sphingosylphosphoethanolamine = an N-(acyl)-sphingosyl-1,3-cyclic phosphate + ethanolamine. The catalysed reaction is a 1-acyl-sn-glycero-3-phosphocholine = a 1-acyl-sn-glycero-2,3-cyclic phosphate + choline. The enzyme catalyses a 1-acyl-sn-glycero-3-phosphoethanolamine = a 1-acyl-sn-glycero-2,3-cyclic phosphate + ethanolamine. Dermonecrotic toxins cleave the phosphodiester linkage between the phosphate and headgroup of certain phospholipids (sphingolipid and lysolipid substrates), forming an alcohol (often choline) and a cyclic phosphate. This toxin acts on sphingomyelin (SM) with a high activity. It may also act on ceramide phosphoethanolamine (CPE), lysophosphatidylcholine (LPC) and lysophosphatidylethanolamine (LPE), but not on lysophosphatidylserine (LPS), and lysophosphatidylglycerol (LPG). It acts by transphosphatidylation, releasing exclusively cyclic phosphate products as second products. In vivo, shows dermonecrotic activity when intradermally injected into rabbit skin and is lethal to mice. Induces increased vascular permeability, edema, inflammatory response, and platelet aggregation. Does not show hemolytic activity (at up to 50 ug). The sequence is that of Dermonecrotic toxin Hl-PLD1 from Hemiscorpius lepturus (Scorpion).